An 87-amino-acid chain; its full sequence is Phosphoribosyl-ATP pyrophosphatase (87 aa).

Belongs to the PRA-PH family.

It is found in the cytoplasm. The enzyme catalyses 1-(5-phospho-beta-D-ribosyl)-ATP + H2O = 1-(5-phospho-beta-D-ribosyl)-5'-AMP + diphosphate + H(+). It participates in amino-acid biosynthesis; L-histidine biosynthesis; L-histidine from 5-phospho-alpha-D-ribose 1-diphosphate: step 2/9. The chain is Phosphoribosyl-ATP pyrophosphatase from Clavibacter sepedonicus (Clavibacter michiganensis subsp. sepedonicus).